Here is a 1894-residue protein sequence, read N- to C-terminus: Plexin-A2 (1894 aa).

The first 34 residues, 1 to 34 (MEQRRFYLRAMQADNLSVVLLSVAWLLLARGTTG), serve as a signal peptide directing secretion. 2 N-linked (GlcNAc...) asparagine glycosylation sites follow: N15 and N76. Residues 35–508 (MPQYSTFHSE…SERQVTRVPV (474 aa)) enclose the Sema domain. The Extracellular segment spans residues 35-1237 (MPQYSTFHSE…VISDSLLTLP (1203 aa)). 2 cysteine pairs are disulfide-bonded: C94/C103 and C129/C137. 2 N-linked (GlcNAc...) asparagine glycosylation sites follow: N163 and N327. Disulfide bonds link C284/C405, C300/C356, C374/C393, C511/C528, C517/C559, C520/C537, C531/C543, and C594/C613. N-linked (GlcNAc...) asparagine glycans are attached at residues N598, N696, and N756. 4 consecutive IPT/TIG domains span residues 858–951 (PQIT…QYTF), 954–1037 (PSVL…QFEY), 1041–1139 (PRVQ…KFIY), and 1143–1228 (PTFE…SVSV). N-linked (GlcNAc...) asparagine glycans are attached at residues N1180 and N1205. Residues 1238–1258 (AIISIAAGGSLLLIIVIIVLI) traverse the membrane as a helical segment. Residues 1259-1894 (AYKRKSREND…HLINAMSIES (636 aa)) are Cytoplasmic-facing. Residues 1261 to 1310 (KRKSRENDLTLKRLQMQMDNLESRVALECKEAFAELQTDINELTSDLDRS) adopt a coiled-coil conformation. The residue at position 1612 (S1612) is a Phosphoserine.

The protein belongs to the plexin family. In terms of assembly, homodimer. Interacts with RND1. Interacts directly with NRP1 and NRP2. The PLXNA2 homodimer interacts with a SEMA6A homodimer, giving rise to a heterotetramer.

It localises to the cell membrane. Coreceptor for SEMA3A and SEMA6A. Necessary for signaling by SEMA6A and class 3 semaphorins and subsequent remodeling of the cytoskeleton. Plays a role in axon guidance, invasive growth and cell migration. Class 3 semaphorins bind to a complex composed of a neuropilin and a plexin. The plexin modulates the affinity of the complex for specific semaphorins, and its cytoplasmic domain is required for the activation of down-stream signaling events in the cytoplasm. The sequence is that of Plexin-A2 (Plxna2) from Mus musculus (Mouse).